Here is a 932-residue protein sequence, read N- to C-terminus: Glycine dehydrogenase (decarboxylating) (932 aa).

Lys-685 carries the post-translational modification N6-(pyridoxal phosphate)lysine.

Belongs to the GcvP family. As to quaternary structure, the glycine cleavage system is composed of four proteins: P, T, L and H. Pyridoxal 5'-phosphate serves as cofactor.

It carries out the reaction N(6)-[(R)-lipoyl]-L-lysyl-[glycine-cleavage complex H protein] + glycine + H(+) = N(6)-[(R)-S(8)-aminomethyldihydrolipoyl]-L-lysyl-[glycine-cleavage complex H protein] + CO2. Its function is as follows. The glycine cleavage system catalyzes the degradation of glycine. The P protein binds the alpha-amino group of glycine through its pyridoxal phosphate cofactor; CO(2) is released and the remaining methylamine moiety is then transferred to the lipoamide cofactor of the H protein. In Brucella melitensis biotype 2 (strain ATCC 23457), this protein is Glycine dehydrogenase (decarboxylating).